Here is a 527-residue protein sequence, read N- to C-terminus: CTP synthase (527 aa).

Residues 1 to 270 (MKYIFVTGGV…ADVLCQLLQL (270 aa)) form an amidoligase domain region. Ser-12 lines the CTP pocket. Ser-12 serves as a coordination point for UTP. ATP-binding positions include 13–18 (GLGKGI) and Asp-70. Positions 70 and 145 each coordinate Mg(2+). Residues 152–154 (DIE), 191–196 (KTKPTQ), and Lys-227 contribute to the CTP site. Residues 191–196 (KTKPTQ) and Lys-227 each bind UTP. The 234-residue stretch at 292 to 525 (TIGIVSKYGK…VEACLKNRGK (234 aa)) folds into the Glutamine amidotransferase type-1 domain. Gly-349 is an L-glutamine binding site. Cys-376 (nucleophile; for glutamine hydrolysis) is an active-site residue. L-glutamine-binding positions include 377 to 380 (LGFQ), Glu-400, and Arg-455. Active-site residues include His-498 and Glu-500.

Belongs to the CTP synthase family. In terms of assembly, homotetramer.

It carries out the reaction UTP + L-glutamine + ATP + H2O = CTP + L-glutamate + ADP + phosphate + 2 H(+). It catalyses the reaction L-glutamine + H2O = L-glutamate + NH4(+). The enzyme catalyses UTP + NH4(+) + ATP = CTP + ADP + phosphate + 2 H(+). It participates in pyrimidine metabolism; CTP biosynthesis via de novo pathway; CTP from UDP: step 2/2. With respect to regulation, allosterically activated by GTP, when glutamine is the substrate; GTP has no effect on the reaction when ammonia is the substrate. The allosteric effector GTP functions by stabilizing the protein conformation that binds the tetrahedral intermediate(s) formed during glutamine hydrolysis. Inhibited by the product CTP, via allosteric rather than competitive inhibition. In terms of biological role, catalyzes the ATP-dependent amination of UTP to CTP with either L-glutamine or ammonia as the source of nitrogen. Regulates intracellular CTP levels through interactions with the four ribonucleotide triphosphates. This Methanospirillum hungatei JF-1 (strain ATCC 27890 / DSM 864 / NBRC 100397 / JF-1) protein is CTP synthase.